Reading from the N-terminus, the 332-residue chain is 2,3-diketo-L-gulonate reductase (332 aa).

Histidine 44 functions as the Proton donor in the catalytic mechanism. NAD(+) is bound by residues 168-174 (ITMVDMS), 224-225 (WK), and 304-306 (GHE).

This sequence belongs to the LDH2/MDH2 oxidoreductase family. DlgD subfamily. In terms of assembly, homodimer.

It is found in the cytoplasm. It catalyses the reaction 3-dehydro-L-gulonate + NAD(+) = 2,3-dioxo-L-gulonate + NADH + H(+). The enzyme catalyses 3-dehydro-L-gulonate + NADP(+) = 2,3-dioxo-L-gulonate + NADPH + H(+). Its function is as follows. Catalyzes the reduction of 2,3-diketo-L-gulonate in the presence of NADH, to form 3-keto-L-gulonate. This chain is 2,3-diketo-L-gulonate reductase, found in Haemophilus influenzae (strain ATCC 51907 / DSM 11121 / KW20 / Rd).